Here is a 301-residue protein sequence, read N- to C-terminus: Putative carboxypeptidase slr1534 (301 aa).

The Nucleophile role is filled by S116. Active-site charge relay system residues include E206 and H276.

Belongs to the peptidase S66 family.

This chain is Putative carboxypeptidase slr1534, found in Synechocystis sp. (strain ATCC 27184 / PCC 6803 / Kazusa).